We begin with the raw amino-acid sequence, 675 residues long: Probable metal-nicotianamine transporter YSL16 (675 aa).

A compositionally biased stretch (gly residues) spans 1 to 11 (MDRHALGGGGA). Residues 1–20 (MDRHALGGGGALEIEKTPEA) form a disordered region. Helical transmembrane passes span 50–70 (GMVA…KLSL), 73–93 (GLIP…LRGW), 118–138 (CAVA…LLGL), 162–182 (GIGW…LTLL), 231–251 (ISFL…CGFL), 283–303 (LVNL…WPLI), 329–349 (FICI…VIVV), 393–413 (MAYT…PVMF), 421–441 (VIIA…GTGL), 453–473 (IALF…AGLV), 507–527 (VGQV…FFLF), 567–587 (LQLC…RDFL), 605–625 (FLVG…VFLW), and 633–653 (AALL…IWTF).

This sequence belongs to the YSL (TC 2.A.67.2) family. In terms of tissue distribution, expressed in roots.

Its subcellular location is the membrane. Its function is as follows. May be involved in the transport of nicotianamine-chelated metals. The sequence is that of Probable metal-nicotianamine transporter YSL16 (YSL16) from Oryza sativa subsp. japonica (Rice).